Consider the following 648-residue polypeptide: DNA gyrase subunit B (648 aa).

Residues 432–546 form the Toprim domain; it reads RELFIVEGNS…YGFVYLAQPP (115 aa). Glu-438, Asp-511, and Asp-513 together coordinate Mg(2+).

This sequence belongs to the type II topoisomerase GyrB family. In terms of assembly, heterotetramer, composed of two GyrA and two GyrB chains. In the heterotetramer, GyrA contains the active site tyrosine that forms a transient covalent intermediate with DNA, while GyrB binds cofactors and catalyzes ATP hydrolysis. The cofactor is Mg(2+). It depends on Mn(2+) as a cofactor. Ca(2+) serves as cofactor.

The protein localises to the cytoplasm. It carries out the reaction ATP-dependent breakage, passage and rejoining of double-stranded DNA.. Functionally, a type II topoisomerase that negatively supercoils closed circular double-stranded (ds) DNA in an ATP-dependent manner to modulate DNA topology and maintain chromosomes in an underwound state. Negative supercoiling favors strand separation, and DNA replication, transcription, recombination and repair, all of which involve strand separation. Also able to catalyze the interconversion of other topological isomers of dsDNA rings, including catenanes and knotted rings. Type II topoisomerases break and join 2 DNA strands simultaneously in an ATP-dependent manner. This chain is DNA gyrase subunit B, found in Metamycoplasma hominis (strain ATCC 23114 / DSM 25592 / NBRC 14850 / NCTC 10111 / PG21) (Mycoplasma hominis).